The following is a 284-amino-acid chain: MQNKIVKIGNIDVANDKPFVLFGGMNVLESRDMAMQVCEAYVKVTEKLGVPYVFKASFDKANRSSIHSYRGPGMEEGLKIFQELKDTFGVKIITDVHEIYQCQPVADVVDIIQLPAFLARQTDLVEAMAKTGAVINVKKPQFLSPSQMGNIVEKIEECGNDKIILCDRGTNFGYDNLIVDMLGFSVMKKASKGSPVIFDVTHSLQCRDPFGAASSGRRAQVTELARSGLAVGIAGLFLEAHPNPNQAKCDGPSALPLSALEGFVSQMKAIDDLVKSFPELDTSI.

It belongs to the KdsA family.

The protein localises to the cytoplasm. It catalyses the reaction D-arabinose 5-phosphate + phosphoenolpyruvate + H2O = 3-deoxy-alpha-D-manno-2-octulosonate-8-phosphate + phosphate. Its pathway is carbohydrate biosynthesis; 3-deoxy-D-manno-octulosonate biosynthesis; 3-deoxy-D-manno-octulosonate from D-ribulose 5-phosphate: step 2/3. It participates in bacterial outer membrane biogenesis; lipopolysaccharide biosynthesis. This chain is 2-dehydro-3-deoxyphosphooctonate aldolase (kdsA), found in Haemophilus influenzae (strain ATCC 51907 / DSM 11121 / KW20 / Rd).